Here is a 272-residue protein sequence, read N- to C-terminus: Bifunctional protein FolD 2 (272 aa).

NADP(+) is bound by residues 157–159 (GRS), T182, and I223.

Belongs to the tetrahydrofolate dehydrogenase/cyclohydrolase family. As to quaternary structure, homodimer.

The enzyme catalyses (6R)-5,10-methylene-5,6,7,8-tetrahydrofolate + NADP(+) = (6R)-5,10-methenyltetrahydrofolate + NADPH. The catalysed reaction is (6R)-5,10-methenyltetrahydrofolate + H2O = (6R)-10-formyltetrahydrofolate + H(+). It functions in the pathway one-carbon metabolism; tetrahydrofolate interconversion. Catalyzes the oxidation of 5,10-methylenetetrahydrofolate to 5,10-methenyltetrahydrofolate and then the hydrolysis of 5,10-methenyltetrahydrofolate to 10-formyltetrahydrofolate. This chain is Bifunctional protein FolD 2, found in Syntrophomonas wolfei subsp. wolfei (strain DSM 2245B / Goettingen).